A 112-amino-acid polypeptide reads, in one-letter code: Phosphoribosyl-AMP cyclohydrolase (112 aa).

Mg(2+) is bound at residue aspartate 76. Cysteine 77 lines the Zn(2+) pocket. 2 residues coordinate Mg(2+): aspartate 78 and aspartate 80. Positions 93 and 100 each coordinate Zn(2+).

Belongs to the PRA-CH family. In terms of assembly, homodimer. The cofactor is Mg(2+). Requires Zn(2+) as cofactor.

It is found in the cytoplasm. It catalyses the reaction 1-(5-phospho-beta-D-ribosyl)-5'-AMP + H2O = 1-(5-phospho-beta-D-ribosyl)-5-[(5-phospho-beta-D-ribosylamino)methylideneamino]imidazole-4-carboxamide. It functions in the pathway amino-acid biosynthesis; L-histidine biosynthesis; L-histidine from 5-phospho-alpha-D-ribose 1-diphosphate: step 3/9. In terms of biological role, catalyzes the hydrolysis of the adenine ring of phosphoribosyl-AMP. In Streptococcus thermophilus (strain ATCC BAA-491 / LMD-9), this protein is Phosphoribosyl-AMP cyclohydrolase.